A 140-amino-acid chain; its full sequence is Large ribosomal subunit protein bL17 (140 aa).

This sequence belongs to the bacterial ribosomal protein bL17 family. As to quaternary structure, part of the 50S ribosomal subunit. Contacts protein L32.

In Rhizobium johnstonii (strain DSM 114642 / LMG 32736 / 3841) (Rhizobium leguminosarum bv. viciae), this protein is Large ribosomal subunit protein bL17.